The chain runs to 388 residues: Putative F-box protein At3g49520 (388 aa).

In terms of domain architecture, F-box spans 1-47; it reads MTTISDLPYDLVKEIFSWVPFTSLRAVRSTCKTWNALSKNQIFGKKS.

In Arabidopsis thaliana (Mouse-ear cress), this protein is Putative F-box protein At3g49520.